Here is a 307-residue protein sequence, read N- to C-terminus: tRNA dimethylallyltransferase (307 aa).

9–16 (GATGTGKS) is an ATP binding site. Residue 11 to 16 (TGTGKS) coordinates substrate.

This sequence belongs to the IPP transferase family. Monomer. The cofactor is Mg(2+).

The catalysed reaction is adenosine(37) in tRNA + dimethylallyl diphosphate = N(6)-dimethylallyladenosine(37) in tRNA + diphosphate. In terms of biological role, catalyzes the transfer of a dimethylallyl group onto the adenine at position 37 in tRNAs that read codons beginning with uridine, leading to the formation of N6-(dimethylallyl)adenosine (i(6)A). The polypeptide is tRNA dimethylallyltransferase (Clavibacter sepedonicus (Clavibacter michiganensis subsp. sepedonicus)).